We begin with the raw amino-acid sequence, 69 residues long: Large ribosomal subunit protein bL28 (69 aa).

The protein belongs to the bacterial ribosomal protein bL28 family.

In Aquifex aeolicus (strain VF5), this protein is Large ribosomal subunit protein bL28.